Reading from the N-terminus, the 357-residue chain is MSKYKIIMTGGGSAGHVTPNLALVPKLKELGYEIQYIGTENGIERKIIESENIKYHIISSGKLRRYFDIKNFSDPFKVLKGVFEAKKIIKREKPNIVFSKGGFVSVPVVIGARLNRIPVISHESDMTPGLANKLAAPFCNKVCVTFPETLKYIKDNKGVLTGTPIREELFKGSKIKGYEICKFKDTTKPVLMIIGGSLGSKVINKSVRDALSNLIKKYNIIHICGKGNLDESLQNVEGYVQFDYVKDELPHLMATADLFISRAGANVIFELLALKKPNLLVPLSAKASRGDQILNAKSFEKSGYSMVIEEESLNSEVITNKIDELFKEKQKYIKNMNSSSANNCVDKIISLIEKYKK.

UDP-N-acetyl-alpha-D-glucosamine contacts are provided by residues 13 to 15 (SAG), R166, S197, and Q292.

It belongs to the glycosyltransferase 28 family. MurG subfamily.

The protein resides in the cell membrane. The catalysed reaction is di-trans,octa-cis-undecaprenyl diphospho-N-acetyl-alpha-D-muramoyl-L-alanyl-D-glutamyl-meso-2,6-diaminopimeloyl-D-alanyl-D-alanine + UDP-N-acetyl-alpha-D-glucosamine = di-trans,octa-cis-undecaprenyl diphospho-[N-acetyl-alpha-D-glucosaminyl-(1-&gt;4)]-N-acetyl-alpha-D-muramoyl-L-alanyl-D-glutamyl-meso-2,6-diaminopimeloyl-D-alanyl-D-alanine + UDP + H(+). The protein operates within cell wall biogenesis; peptidoglycan biosynthesis. Cell wall formation. Catalyzes the transfer of a GlcNAc subunit on undecaprenyl-pyrophosphoryl-MurNAc-pentapeptide (lipid intermediate I) to form undecaprenyl-pyrophosphoryl-MurNAc-(pentapeptide)GlcNAc (lipid intermediate II). This chain is UDP-N-acetylglucosamine--N-acetylmuramyl-(pentapeptide) pyrophosphoryl-undecaprenol N-acetylglucosamine transferase, found in Clostridium novyi (strain NT).